The sequence spans 420 residues: Tyrosine--tRNA ligase (420 aa).

Tyrosine 33 serves as a coordination point for L-tyrosine. The 'HIGH' region motif lies at 38–47 (PTADSLHVGH). L-tyrosine is bound by residues tyrosine 167 and glutamine 171. A 'KMSKS' region motif is present at residues 227 to 231 (KFGKT). Residue lysine 230 coordinates ATP. The S4 RNA-binding domain maps to 353–419 (LTVADLLVKV…GKRNYALVKV (67 aa)).

It belongs to the class-I aminoacyl-tRNA synthetase family. TyrS type 1 subfamily. Homodimer.

It is found in the cytoplasm. The enzyme catalyses tRNA(Tyr) + L-tyrosine + ATP = L-tyrosyl-tRNA(Tyr) + AMP + diphosphate + H(+). Its function is as follows. Catalyzes the attachment of tyrosine to tRNA(Tyr) in a two-step reaction: tyrosine is first activated by ATP to form Tyr-AMP and then transferred to the acceptor end of tRNA(Tyr). The protein is Tyrosine--tRNA ligase of Anaeromyxobacter dehalogenans (strain 2CP-C).